The chain runs to 215 residues: 2-phospho-L-lactate guanylyltransferase (215 aa).

This sequence belongs to the CofC family. In terms of assembly, homodimer.

It carries out the reaction (2S)-2-phospholactate + GTP + H(+) = (2S)-lactyl-2-diphospho-5'-guanosine + diphosphate. Its pathway is cofactor biosynthesis; coenzyme F420 biosynthesis. Its function is as follows. Guanylyltransferase that catalyzes the activation of (2S)-2-phospholactate (2-PL) as (2S)-lactyl-2-diphospho-5'-guanosine, via the condensation of 2-PL with GTP. It is involved in the biosynthesis of coenzyme F420, a hydride carrier cofactor. This chain is 2-phospho-L-lactate guanylyltransferase, found in Methanoculleus marisnigri (strain ATCC 35101 / DSM 1498 / JR1).